The chain runs to 370 residues: Ni-sirohydrochlorin a,c-diamide reductive cyclase complex, component CfbD (370 aa).

This sequence belongs to the NifD/NifK/NifE/NifN family. As to quaternary structure, homodimer or monomer. The Ni-sirohydrochlorin a,c-diamide reductive cyclase complex is composed of a NifH homolog component CfbC and a NifD homolog component CfbD. [4Fe-4S] cluster serves as cofactor.

The enzyme catalyses Ni-sirohydrochlorin a,c-diamide + 3 AH2 + ATP + H2O = 15,17(3)-seco-F430-17(3)-acid + 3 A + ADP + phosphate. Its function is as follows. Involved in the biosynthesis of the unique nickel-containing tetrapyrrole coenzyme F430, the prosthetic group of methyl-coenzyme M reductase (MCR), which plays a key role in methanogenesis and anaerobic methane oxidation. Catalyzes both the six-electron reduction of the tetrahydroporphyrin ring system and the gamma-lactamization of the c-acetamide side chain of Ni-sirohydrochlorin a,c-diamide to yield 15,17(3)-seco-F430-17(3)-acid (seco-F430), the last intermediate in the biosynthesis of the coenzyme F430. This Methanosarcina acetivorans (strain ATCC 35395 / DSM 2834 / JCM 12185 / C2A) protein is Ni-sirohydrochlorin a,c-diamide reductive cyclase complex, component CfbD.